We begin with the raw amino-acid sequence, 449 residues long: Transcription factor AP-2 gamma (449 aa).

Lys-10 participates in a covalent cross-link: Glycyl lysine isopeptide (Lys-Gly) (interchain with G-Cter in SUMO). The tract at residues 13–58 (EDCEDRHDSSSNGNPRIPHLSSPGQHLYSPAPPLSHTGVAEYQPPP) is disordered. A PPxY motif motif is present at residues 59–64 (YFPPPY). The interval 94-130 (AATGSQQQAWPGRQSQEGSSLASHHSRSASLIPHISG) is disordered. Polar residues predominate over residues 95–111 (ATGSQQQAWPGRQSQEG). Residues 112-124 (SSLASHHSRSASL) are compositionally biased toward low complexity. A Phosphoserine; by PKA modification is found at Ser-251. Residues 292 to 423 (RRKAAHVTLL…YIKEALIAID (132 aa)) are H-S-H (helix-span-helix), dimerization. Residues 426 to 449 (YMNPGDQSPADSSKTMEKMEKHRK) are disordered. Ser-433 carries the phosphoserine modification. Residues 439-449 (KTMEKMEKHRK) show a composition bias toward basic and acidic residues.

It belongs to the AP-2 family. Binds DNA as a dimer. Can form homodimers or heterodimers with other AP-2 family members. Interacts with WWOX. Interacts with UBE2I. Interacts with KCTD1; this interaction represses transcription activation. Interacts with CITED2 (via C-terminus); the interaction stimulates TFAP2B-transcriptional activity. Interacts with CITED4. Interacts with MTA1. Post-translationally, sumoylated on Lys-10; which inhibits transcriptional activity. As to expression, expressed in lung, ovary and testis. Expressed in most squamous epithelia. Also, detected in several exocrine glands including the prostate, the preputial and salivary glands, serous glands of the tongue and ocular harderian glands.

It localises to the nucleus. Sequence-specific DNA-binding transcription factor that interacts with cellular enhancer elements to regulate transcription of selected genes, and which plays a key role in early embryonic development. AP-2 factors bind to the consensus sequence 5'-GCCNNNGGC-3' and activate genes involved in a large spectrum of important biological functions. TFAP2C plays a key role in early embryonic development by regulating both inner cell mass (ICM) and trophectoderm differentiation. At the 8-cell stage, during morula development, controls expression of cell-polarity genes. Upon trophoblast commitment, binds to late trophectoderm genes in blastocysts together with CDX2, and later to extra-embryonic ectoderm genes together with SOX2. Binds to both closed and open chromatin with other transcription factors. This chain is Transcription factor AP-2 gamma, found in Mus musculus (Mouse).